Reading from the N-terminus, the 527-residue chain is Oviduct-specific glycoprotein (527 aa).

A signal peptide spans 1–21; that stretch reads MGKLLLWVGLVLVLKHHNGAA. The 364-residue stretch at 22-385 folds into the GH18 domain; it reads HKLVCYFANW…YMLNDLLLKA (364 aa). A disulfide bond links C26 and C51. N62 carries an N-linked (GlcNAc...) asparagine glycan. Residues 71–72, 98–101, Y142, 211–214, and W355 contribute to the chitin site; these read AR, GGWN, and LSYD. N-linked (GlcNAc...) asparagine glycans are attached at residues N402 and N441. A disordered region spans residues 433 to 527; it reads TETHGRSDNM…MTLPSGKRSD (95 aa).

This sequence belongs to the glycosyl hydrolase 18 family. Oviduct.

Its subcellular location is the cytoplasmic vesicle. It is found in the secretory vesicle. In terms of biological role, binds to oocyte zona pellucida in vivo. May play a role in the fertilization process and/or early embryonic development. In Sus scrofa (Pig), this protein is Oviduct-specific glycoprotein (OVGP1).